We begin with the raw amino-acid sequence, 233 residues long: Peroxisomal membrane protein 11-5 (233 aa).

The Cytoplasmic portion of the chain corresponds to 1-92 (MSSLESARAD…PLILLGKSKN (92 aa)). Residues 93–113 (ALLSTFLFLDQIVWAGRTGIY) form a helical membrane-spanning segment. Residues 114-206 (KNKERAEFLS…LLQLAPKKVT (93 aa)) lie on the Lumenal side of the membrane. Residues 207 to 226 (PRVTGAFGFASSLIACYQLL) traverse the membrane as a helical segment.

It belongs to the peroxin-11 family. As to expression, expressed in seedlings, roots, shoots, leaf sheaths, flag leaf, panicles, spikelets, and endosperm.

It is found in the peroxisome membrane. Functionally, involved in peroxisomal proliferation. The polypeptide is Peroxisomal membrane protein 11-5 (PEX11-5) (Oryza sativa subsp. japonica (Rice)).